We begin with the raw amino-acid sequence, 168 residues long: Pollen allergen Che a 1 (168 aa).

The N-terminal stretch at 1 to 25 (MAKCQAVFLLVGALCVLSLAGVANA) is a signal peptide. 3 disulfide bridges follow: cysteine 38/cysteine 109, cysteine 41/cysteine 153, and cysteine 62/cysteine 97. Asparagine 64 carries N-linked (GlcNAc...) asparagine glycosylation.

It belongs to the Ole e I family.

The protein localises to the secreted. The protein is Pollen allergen Che a 1 of Chenopodium album (Fat hen).